The following is a 630-amino-acid chain: MPEDSNTNDNNKRPLEDNNAVDGESDDDIGPMLPPPPGEDAPRKKKRTLAHEKLYLDQLPCADMYEKSYMHRDVLSQVAVTKKDFIITTSVDGHLKFWKKTASGIEFVKHYKSHLSSIVDISISANHELLATISDDTTLKVYDITNFDMINMIKLRYKPKSVCWIHQSGQAQALVAVSEADNSNIHIYDGHADGKPLHTLSKMHSKPVHIIEFNSRFNCVVSVDAIGMIEYWSPEAPFALPDNLDFELKSQTDLYEFRKKKSVPTCLTFSPDGLSFATMSFPDRQVRLFKFLRGKMFREYDESLQAVSEMQQAGTTIHHLDDMEFGRRLAVEKELEKSNQARFVNAVFDNSGNFIIYGSLLGVKIVNIRTNKVVCLLGKSESNRFVNVSLYQGAPKKKAVYTLAMIASENAALKESQELDPTLFCTAFNKNRFYMMTRREPFDDINQKAERDIFNEKPSREEQTVAATQERKQILGTSAIIRTTSGDIHMRLFPDAAPKAVENFTTHAKNGYYDNLIFHRVIKGFMIQTGCPFGDGTGGESIWGDDFEDEFSREFRHDRPYTVSMANAGPNTNGSQFFITVAPTTWLDNKHSVFGRVTAGMDVVHSIESAKVDKTNKPLDDIKIINIDIR.

The interval 1-46 (MPEDSNTNDNNKRPLEDNNAVDGESDDDIGPMLPPPPGEDAPRKKK) is disordered. WD repeat units follow at residues 70–108 (MHRDVLSQVAVTKKDFIITTSVDGHLKFWKKTASGIEFV), 113–152 (SHLSSIVDISISANHELLATISDDTTLKVYDITNFDMINM), 157–198 (YKPK…KPLH), 203–242 (MHSKPVHIIEFNSRFNCVVSVDAIGMIEYWSPEAPFALPD), and 258–301 (RKKK…REYD). Residues 475 to 629 (LGTSAIIRTT…DDIKIINIDI (155 aa)) form the PPIase cyclophilin-type domain.

The protein belongs to the cyclophilin-type PPIase family.

It catalyses the reaction [protein]-peptidylproline (omega=180) = [protein]-peptidylproline (omega=0). Functionally, PPIases accelerate the folding of proteins. It catalyzes the cis-trans isomerization of proline imidic peptide bonds in oligopeptides. In Rhizopus delemar (strain RA 99-880 / ATCC MYA-4621 / FGSC 9543 / NRRL 43880) (Mucormycosis agent), this protein is Peptidyl-prolyl cis-trans isomerase cyp15 (cyp15).